Consider the following 425-residue polypeptide: Palmitoyltransferase ZDHHC23 (425 aa).

Residues 1–81 are Cytoplasmic-facing; it reads MKPVKKKKTE…RIPWLRGAKK (81 aa). A helical membrane pass occupies residues 82–99; the sequence is VNISIVPPLVLLPVFLHV. The Lumenal segment spans residues 100 to 102; sequence ASW. A helical transmembrane segment spans residues 103 to 125; the sequence is HFLLGVVVLTSLPMLALWYYYLT. The Cytoplasmic portion of the chain corresponds to 126-130; the sequence is HRRKE. A helical transmembrane segment spans residues 131–151; sequence QTLFFLSLGLFSLGYMYYVFL. The Lumenal segment spans residues 152–159; sequence REVVPQGR. Residues 160–180 traverse the membrane as a helical segment; that stretch reads VGPTQLALLTCGLLLILLALY. The Cytoplasmic segment spans residues 181–292; sequence RAKKNPGYLS…NSCVGESNHQ (112 aa). The region spanning 249–299 is the DHHC domain; it reads DWCAKCQLVRPARAWHCRICGICVRRMDHHCVWINSCVGESNHQAFILALS. The S-palmitoyl cysteine intermediate role is filled by C279. The helical transmembrane segment at 293–313 threads the bilayer; it reads AFILALSIFLLTSVYGISLTL. Residues 314-343 are Lumenal-facing; the sequence is NTICRDRSLFTALFYCPGVYANYSSALSFT. The helical transmembrane segment at 344–364 threads the bilayer; sequence CVWYSVIITAGMAYIFLIQLI. The Cytoplasmic segment spans residues 365-425; sequence NISYNVTERE…TVHTPAEDIV (61 aa). Residues 422–425 form an interaction with NOS1 region; that stretch reads EDIV.

The protein belongs to the DHHC palmitoyltransferase family. Interacts with NOS1. As to expression, expressed in the brain.

The protein localises to the golgi apparatus membrane. It is found in the golgi apparatus. Its subcellular location is the trans-Golgi network membrane. It carries out the reaction L-cysteinyl-[protein] + hexadecanoyl-CoA = S-hexadecanoyl-L-cysteinyl-[protein] + CoA. Its function is as follows. Palmitoyltransferase that could catalyze the addition of palmitate onto various protein substrates and be involved in a variety of cellular processes. Palmitoyltransferase that mediates palmitoylation of KCNMA1, regulating localization of KCNMA1 to the plasma membrane. May be involved in NOS1 regulation and targeting to the synaptic membrane. This is Palmitoyltransferase ZDHHC23 from Mus musculus (Mouse).